Consider the following 667-residue polypeptide: tRNA 5-methylaminomethyl-2-thiouridine biosynthesis bifunctional protein MnmC (667 aa).

Positions 1–215 are tRNA (mnm(5)s(2)U34)-methyltransferase; it reads MKFINGILFN…KREMIRAYFN (215 aa). The tract at residues 240–667 is FAD-dependent cmnm(5)s(2)U34 oxidoreductase; that stretch reads IGAGIAGIVT…LIRKLKKGLK (428 aa).

It in the N-terminal section; belongs to the methyltransferase superfamily. tRNA (mnm(5)s(2)U34)-methyltransferase family. This sequence in the C-terminal section; belongs to the DAO family. It depends on FAD as a cofactor.

Its subcellular location is the cytoplasm. It carries out the reaction 5-aminomethyl-2-thiouridine(34) in tRNA + S-adenosyl-L-methionine = 5-methylaminomethyl-2-thiouridine(34) in tRNA + S-adenosyl-L-homocysteine + H(+). Catalyzes the last two steps in the biosynthesis of 5-methylaminomethyl-2-thiouridine (mnm(5)s(2)U) at the wobble position (U34) in tRNA. Catalyzes the FAD-dependent demodification of cmnm(5)s(2)U34 to nm(5)s(2)U34, followed by the transfer of a methyl group from S-adenosyl-L-methionine to nm(5)s(2)U34, to form mnm(5)s(2)U34. In Campylobacter hominis (strain ATCC BAA-381 / DSM 21671 / CCUG 45161 / LMG 19568 / NCTC 13146 / CH001A), this protein is tRNA 5-methylaminomethyl-2-thiouridine biosynthesis bifunctional protein MnmC.